An 84-amino-acid chain; its full sequence is Succinate dehydrogenase membrane anchor subunit (84 aa).

The Mitochondrial matrix segment spans residues 1-3 (MIT). The chain crosses the membrane as a helical span at residues 4–24 (FQWLIVRVVALFISLTILIDI). The Mitochondrial intermembrane segment spans residues 25-31 (EMFVVML). Residues 32–52 (SFLIIHISIGLKAIIHDYIHF) form a helical membrane-spanning segment. Position 37 (H37) interacts with heme. Y49 is an a ubiquinone binding site. At 53 to 58 (QKIKLM) the chain is on the mitochondrial matrix side. The helical transmembrane segment at 59 to 81 (LLILLRVSAIEISRSFRTFYIII) threads the bilayer. Residues 82-84 (KNT) lie on the Mitochondrial intermembrane side of the membrane.

Part of an enzyme complex containing four subunits: a flavoprotein, an iron-sulfur protein, plus two membrane-anchoring proteins. The cofactor is heme.

It is found in the mitochondrion inner membrane. Its pathway is carbohydrate metabolism; tricarboxylic acid cycle. In terms of biological role, membrane-anchoring subunit of succinate dehydrogenase (SDH). The sequence is that of Succinate dehydrogenase membrane anchor subunit (SDH4) from Chondrus crispus (Carrageen Irish moss).